The sequence spans 462 residues: Sensor histidine kinase ZraS (462 aa).

Over 1-14 (MNVMRLSKDSVAVG) the chain is Cytoplasmic. The chain crosses the membrane as a helical span at residues 15–35 (LSWLLTGLILLLVCLFSALIV). Residues 36-197 (RDYGRENEAA…ADHARGLRNM (162 aa)) are Periplasmic-facing. The helical transmembrane segment at 198-218 (VIMLCAAGVVMAATVLAQFWF) threads the bilayer. Residues 219-462 (RRYQRSRKQL…VNGQQKDEQG (244 aa)) lie on the Cytoplasmic side of the membrane. One can recognise a Histidine kinase domain in the interval 247–455 (GVAHEIRNPL…LFTFYLPVNG (209 aa)). Phosphohistidine; by autocatalysis is present on His-250.

Post-translationally, autophosphorylated.

The protein resides in the cell inner membrane. It catalyses the reaction ATP + protein L-histidine = ADP + protein N-phospho-L-histidine.. Activity of the ZraS/ZraR two-component system is repressed by the zinc-bound form of ZraP, which probably interacts with the periplasmic region of ZraS. Its function is as follows. Part of the Zra signaling pathway, an envelope stress response (ESR) system composed of the periplasmic accessory protein ZraP, the histidine kinase ZraS and the transcriptional regulator ZraR. The ZraPSR system contributes to antibiotic resistance and is important for membrane integrity in the presence of membrane-targeting biocides. ZraS is a member of the two-component regulatory system ZraS/ZraR. Functions as a membrane-associated sensor kinase that phosphorylates ZraR in response to high concentrations of Zn(2+) or Pb(2+) in the medium. The chain is Sensor histidine kinase ZraS (zraS) from Klebsiella oxytoca.